A 348-amino-acid chain; its full sequence is Endoglucanase-6B (348 aa).

The substrate site is built by tryptophan 52 and serine 54. Catalysis depends on proton donor residues aspartate 92 and aspartate 139. Substrate contacts are provided by asparagine 183, tryptophan 186, asparagine 222, tryptophan 282, lysine 310, and glutamate 314. Low complexity predominate over residues 222–241 (NYNPYSTSNPPPYTSGSPSP). Residues 222 to 244 (NYNPYSTSNPPPYTSGSPSPDES) form a disordered region.

It belongs to the glycosyl hydrolase 6 (cellulase B) family. As to quaternary structure, monomer.

The catalysed reaction is Endohydrolysis of (1-&gt;4)-beta-D-glucosidic linkages in cellulose, lichenin and cereal beta-D-glucans.. In terms of biological role, plays a central role in the recycling of plant biomass. The biological conversion of cellulose to glucose generally requires three types of hydrolytic enzymes: (1) Endoglucanases which cut internal beta-1,4-glucosidic bonds; (2) Exocellobiohydrolases that cut the disaccharide cellobiose from the non-reducing end of the cellulose polymer chain; (3) Beta-1,4-glucosidases which hydrolyze the cellobiose and other short cello-oligosaccharides to glucose. This is Endoglucanase-6B from Humicola insolens (Soft-rot fungus).